The primary structure comprises 245 residues: TPR repeat-containing protein PA4299 (245 aa).

An N-terminal signal peptide occupies residues 1–16 (MKALIGIGLCAALLGG). The N-palmitoyl cysteine moiety is linked to residue Cys17. The S-diacylglycerol cysteine moiety is linked to residue Cys17. 3 TPR repeats span residues 100 to 133 (PEAHHGLGLLALRNGDSARAVLELREAARLRPTE), 135 to 167 (RFRNDLGVALLKRGDRVGARFEFITALELQQGG), and 169 to 200 (LPATNLLGLLYLQGDREDAQRLIERLQLDARD). The disordered stretch occupies residues 210-245 (SWGAVPTPGAAPASDDPLAELPAEANMHTAMANEAP).

The protein localises to the cell membrane. This chain is TPR repeat-containing protein PA4299, found in Pseudomonas aeruginosa (strain ATCC 15692 / DSM 22644 / CIP 104116 / JCM 14847 / LMG 12228 / 1C / PRS 101 / PAO1).